We begin with the raw amino-acid sequence, 169 residues long: Probable GPI-anchored adhesin-like protein PGA22 (169 aa).

The signal sequence occupies residues 1–18; sequence MKYSTLAWLVIASYTVFA. 4 N-linked (GlcNAc...) asparagine glycosylation sites follow: Asn87, Asn104, Asn111, and Asn118. A lipid anchor (GPI-anchor amidated glycine) is attached at Gly140. The propeptide at 141-169 is removed in mature form; the sequence is PALTTTTVAEAFSLAAGASLGYLVALLFL.

The protein resides in the cell membrane. Putative adhesin which may be involved in cell adhesion and virulence. The protein is Probable GPI-anchored adhesin-like protein PGA22 (PGA22) of Candida albicans (strain SC5314 / ATCC MYA-2876) (Yeast).